The following is a 374-amino-acid chain: GDSL esterase/lipase At1g71250 (374 aa).

A signal peptide spans 1–28; it reads MNTNRKKMKVHIGGYVLILALTVSVILQ. Residue Ser-48 is the Nucleophile of the active site. N-linked (GlcNAc...) asparagine glycosylation occurs at Asn-162. Catalysis depends on residues Asp-338 and His-341.

It belongs to the 'GDSL' lipolytic enzyme family.

It localises to the secreted. The protein is GDSL esterase/lipase At1g71250 of Arabidopsis thaliana (Mouse-ear cress).